The chain runs to 242 residues: 1-(5-phosphoribosyl)-5-[(5-phosphoribosylamino)methylideneamino] imidazole-4-carboxamide isomerase (242 aa).

The active-site Proton acceptor is the aspartate 8. Catalysis depends on aspartate 129, which acts as the Proton donor.

This sequence belongs to the HisA/HisF family.

It is found in the cytoplasm. The catalysed reaction is 1-(5-phospho-beta-D-ribosyl)-5-[(5-phospho-beta-D-ribosylamino)methylideneamino]imidazole-4-carboxamide = 5-[(5-phospho-1-deoxy-D-ribulos-1-ylimino)methylamino]-1-(5-phospho-beta-D-ribosyl)imidazole-4-carboxamide. The protein operates within amino-acid biosynthesis; L-histidine biosynthesis; L-histidine from 5-phospho-alpha-D-ribose 1-diphosphate: step 4/9. This is 1-(5-phosphoribosyl)-5-[(5-phosphoribosylamino)methylideneamino] imidazole-4-carboxamide isomerase from Maridesulfovibrio salexigens (strain ATCC 14822 / DSM 2638 / NCIMB 8403 / VKM B-1763) (Desulfovibrio salexigens).